The chain runs to 227 residues: MTANIPVITIDGPGGAGKGTLCKAMAEALGWHLLDSGAIYRVLALAALHHHVDVESEEALVPLAAHLDVRFISTDGTLEVVLEGEDVSGEIRTQEVANAASKVAAFPRVREALLRRQRAFRELPGLIADGRDMGTVVFPDAPVKIFLDASADERAHRRMRQLQEKGFDVNFERLLSEIKERDDRDRNRAVAPLVPAADALVLDSTELNIEQVIEKALQYAREKLAVA.

12–20 lines the ATP pocket; it reads GPGGAGKGT.

This sequence belongs to the cytidylate kinase family. Type 1 subfamily.

Its subcellular location is the cytoplasm. The enzyme catalyses CMP + ATP = CDP + ADP. It catalyses the reaction dCMP + ATP = dCDP + ADP. This Klebsiella pneumoniae (strain 342) protein is Cytidylate kinase.